Reading from the N-terminus, the 817-residue chain is Fibroblast growth factor receptor 2 (817 aa).

A signal peptide spans 1–22; it reads MFARGWLLGALLLMTLATVSVA. Residues 23–377 lie on the Extracellular side of the membrane; the sequence is RPSLKIDLVN…ETDYPPDYVE (355 aa). 3 Ig-like C2-type domains span residues 26-126, 159-247, and 256-358; these read LKID…VNVT, PEKM…YTLD, and PILQ…AWLT. N-linked (GlcNAc...) asparagine glycosylation is found at Asn-32, Asn-84, and Asn-124. The cysteines at positions 63 and 108 are disulfide-linked. A heparin-binding region spans residues 161–178; the sequence is KMEKKLHAVPAANTVKFR. An intrachain disulfide couples Cys-179 to Cys-231. N-linked (GlcNAc...) asparagine glycosylation is found at Asn-228, Asn-265, Asn-297, Asn-318, and Asn-331. A disulfide bridge connects residues Cys-278 and Cys-342. The helical transmembrane segment at 378-398 threads the bilayer; the sequence is IAIYCIGVFLIACMVVIVVVC. The Cytoplasmic segment spans residues 399–817; the sequence is RMRTSAKKPD…YQHINGGIKT (419 aa). Residues 429–465 form a disordered region; that stretch reads TVSSDSSSSMSSSTPLVRITTRRSSAHDDPIPEYDLP. Residues 431–441 are compositionally biased toward low complexity; it reads SSDSSSSMSSS. Residue Tyr-462 is modified to Phosphotyrosine; by autocatalysis. Residues 477–766 enclose the Protein kinase domain; that stretch reads LTLGKPLGEG…LTLATNEEYL (290 aa). ATP-binding positions include 483–491, Lys-513, 561–563, and Asn-567; these read LGEGCFGQV and EYA. Tyr-582 carries the post-translational modification Phosphotyrosine; by autocatalysis. The active-site Proton acceptor is Asp-622. A phosphotyrosine; by autocatalysis mark is found at Tyr-652, Tyr-653, and Tyr-765.

This sequence belongs to the protein kinase superfamily. Tyr protein kinase family. Fibroblast growth factor receptor subfamily. As to quaternary structure, monomer. Homodimer after ligand binding. In terms of processing, autophosphorylated. Binding of FGF family members together with heparan sulfate proteoglycan or heparin promotes receptor dimerization and autophosphorylation on tyrosine residues. Autophosphorylation occurs in trans between the two FGFR molecules present in the dimer. Post-translationally, N-glycosylated in the endoplasmic reticulum. The N-glycan chains undergo further maturation to an Endo H-resistant form in the Golgi apparatus. Ubiquitinated. FGFR2 is rapidly ubiquitinated after autophosphorylation, leading to internalization and degradation. Subject to degradation both in lysosomes and by the proteasome.

Its subcellular location is the cell membrane. It localises to the golgi apparatus. The protein localises to the cytoplasmic vesicle. It catalyses the reaction L-tyrosyl-[protein] + ATP = O-phospho-L-tyrosyl-[protein] + ADP + H(+). Its activity is regulated as follows. Present in an inactive conformation in the absence of bound ligand. Ligand binding leads to dimerization and activation by autophosphorylation on tyrosine residues. Functionally, tyrosine-protein kinase that acts as a cell-surface receptor for fibroblast growth factors and plays an essential role in the regulation of cell proliferation, differentiation, migration and apoptosis, and in the regulation of embryonic development. Required for normal embryonic patterning, limb bud development, lung morphogenesis, osteogenesis and skin development. Plays an essential role in the regulation of osteoblast differentiation, proliferation and apoptosis, and is required for normal skeleton development. Promotes cell proliferation in keratinocytes and immature osteoblasts, but promotes apoptosis in differentiated osteoblasts. Phosphorylates PLCG1, FRS2 and PAK4. Ligand binding leads to the activation of several signaling cascades. Activation of PLCG1 leads to the production of the cellular signaling molecules diacylglycerol and inositol 1,4,5-trisphosphate. Phosphorylation of FRS2 triggers recruitment of GRB2, GAB1, PIK3R1 and SOS1, and mediates activation of RAS, MAPK1/ERK2, MAPK3/ERK1 and the MAP kinase signaling pathway, as well as of the AKT1 signaling pathway. FGFR2 signaling is down-regulated by ubiquitination, internalization and degradation. Mutations that lead to constitutive kinase activation or impair normal FGFR2 maturation, internalization and degradation lead to aberrant signaling. Over-expressed FGFR2 promotes activation of STAT1. The sequence is that of Fibroblast growth factor receptor 2 (fgfr2) from Danio rerio (Zebrafish).